A 118-amino-acid polypeptide reads, in one-letter code: Thioredoxin H-type (118 aa).

The 113-residue stretch at 2 to 114 (AAEEGQVIGC…LQQTIAKHMA (113 aa)) folds into the Thioredoxin domain. Active-site nucleophile residues include Cys40 and Cys43. A disulfide bridge links Cys40 with Cys43.

Belongs to the thioredoxin family. Plant H-type subfamily.

It is found in the cytoplasm. Its function is as follows. Participates in various redox reactions through the reversible oxidation of the active center dithiol to a disulfide. The H form is known to activate a number of cytosolic enzymes. In Ricinus communis (Castor bean), this protein is Thioredoxin H-type.